A 198-amino-acid chain; its full sequence is Holliday junction branch migration complex subunit RuvA (198 aa).

A domain I region spans residues 1–63 (MYDYIKGQLT…EDAHLLFGFH (63 aa)). Positions 64–142 (TKDEKDVFLK…EAPQETGNTK (79 aa)) are domain II. The interval 143 to 147 (ARSNK) is flexible linker. Residues 148–198 (AGNTQLDEAIEALLALGYKATELKKIRAFFEGTSETAEQYIKSALKLLMKG) form a domain III region.

This sequence belongs to the RuvA family. In terms of assembly, homotetramer. Forms an RuvA(8)-RuvB(12)-Holliday junction (HJ) complex. HJ DNA is sandwiched between 2 RuvA tetramers; dsDNA enters through RuvA and exits via RuvB. An RuvB hexamer assembles on each DNA strand where it exits the tetramer. Each RuvB hexamer is contacted by two RuvA subunits (via domain III) on 2 adjacent RuvB subunits; this complex drives branch migration. In the full resolvosome a probable DNA-RuvA(4)-RuvB(12)-RuvC(2) complex forms which resolves the HJ.

It localises to the cytoplasm. The RuvA-RuvB-RuvC complex processes Holliday junction (HJ) DNA during genetic recombination and DNA repair, while the RuvA-RuvB complex plays an important role in the rescue of blocked DNA replication forks via replication fork reversal (RFR). RuvA specifically binds to HJ cruciform DNA, conferring on it an open structure. The RuvB hexamer acts as an ATP-dependent pump, pulling dsDNA into and through the RuvAB complex. HJ branch migration allows RuvC to scan DNA until it finds its consensus sequence, where it cleaves and resolves the cruciform DNA. In Streptococcus pyogenes serotype M18 (strain MGAS8232), this protein is Holliday junction branch migration complex subunit RuvA.